The sequence spans 865 residues: Eukaryotic translation initiation factor 3 subunit C (865 aa).

Disordered stretches follow at residues 1–92 and 206–243; these read MSRF…AKDK and EDEE…VGKG. Acidic residues-rich tracts occupy residues 16–54 and 69–80; these read SSDE…DSDA and DDDSSDEEDSDA. Basic and acidic residues predominate over residues 82-92; it reads VTTKVKSAKDK. The segment covering 226-235 has biased composition (acidic residues); that stretch reads ATAEDEEDDE. In terms of domain architecture, PCI spans 606-780; sequence FHMHINLELL…QTVIFRKGVE (175 aa). A disordered region spans residues 801–865; it reads SNERTLEQRT…GGALGAAVRA (65 aa). Polar residues predominate over residues 808 to 817; the sequence is QRTQGTSNAF. The span at 822–841 shows a compositional bias: gly residues; sequence GRGGRGGGRGRGGGRGGPRF.

The protein belongs to the eIF-3 subunit C family. As to quaternary structure, component of the eukaryotic translation initiation factor 3 (eIF-3) complex.

It localises to the cytoplasm. Its function is as follows. Component of the eukaryotic translation initiation factor 3 (eIF-3) complex, which is involved in protein synthesis of a specialized repertoire of mRNAs and, together with other initiation factors, stimulates binding of mRNA and methionyl-tRNAi to the 40S ribosome. The eIF-3 complex specifically targets and initiates translation of a subset of mRNAs involved in cell proliferation. This chain is Eukaryotic translation initiation factor 3 subunit C, found in Pyricularia oryzae (strain 70-15 / ATCC MYA-4617 / FGSC 8958) (Rice blast fungus).